Reading from the N-terminus, the 544-residue chain is Chaperonin GroEL (544 aa).

Residues 30–33, Lys-51, 87–91, Gly-415, 479–481, and Asp-495 contribute to the ATP site; these read TLGP, DGTTT, and NAA.

This sequence belongs to the chaperonin (HSP60) family. In terms of assembly, forms a cylinder of 14 subunits composed of two heptameric rings stacked back-to-back. Interacts with the co-chaperonin GroES.

It localises to the cytoplasm. It catalyses the reaction ATP + H2O + a folded polypeptide = ADP + phosphate + an unfolded polypeptide.. Together with its co-chaperonin GroES, plays an essential role in assisting protein folding. The GroEL-GroES system forms a nano-cage that allows encapsulation of the non-native substrate proteins and provides a physical environment optimized to promote and accelerate protein folding. This is Chaperonin GroEL from Francisella tularensis subsp. tularensis (strain SCHU S4 / Schu 4).